A 91-amino-acid chain; its full sequence is Mercuric transport protein periplasmic component (91 aa).

Residues 1 to 19 form the signal peptide; that stretch reads MKKLFASLAIAAVVAPVWA. The HMA domain occupies 22 to 88; the sequence is QTVTLSVPGM…ATEDAGYPSS (67 aa). Positions 33 and 36 each coordinate Hg(2+).

The protein belongs to the MerP family. As to quaternary structure, monomer.

It is found in the periplasm. Functionally, involved in mercury resistance. Acts as a mercury scavenger that specifically binds to a mercuric ion in the periplasm and probably passes it to the cytoplasmic mercuric reductase MerA via the mercuric transport protein MerT. This Serratia marcescens protein is Mercuric transport protein periplasmic component.